The primary structure comprises 245 residues: Type III pantothenate kinase (245 aa).

Residue aspartate 6 to lysine 13 participates in ATP binding. Substrate is bound by residues tyrosine 93 and glycine 100–arginine 103. The Proton acceptor role is filled by aspartate 102. Aspartate 121 provides a ligand contact to K(+). ATP is bound at residue serine 124. Threonine 175 contacts substrate.

The protein belongs to the type III pantothenate kinase family. As to quaternary structure, homodimer. The cofactor is NH4(+). K(+) serves as cofactor.

Its subcellular location is the cytoplasm. The enzyme catalyses (R)-pantothenate + ATP = (R)-4'-phosphopantothenate + ADP + H(+). Its pathway is cofactor biosynthesis; coenzyme A biosynthesis; CoA from (R)-pantothenate: step 1/5. Its function is as follows. Catalyzes the phosphorylation of pantothenate (Pan), the first step in CoA biosynthesis. In Alcanivorax borkumensis (strain ATCC 700651 / DSM 11573 / NCIMB 13689 / SK2), this protein is Type III pantothenate kinase.